Consider the following 512-residue polypeptide: Alpha-amylase (512 aa).

An N-terminal signal peptide occupies residues M1 to A29. Ca(2+)-binding residues include N133, D190, A210, D212, D223, D229, D231, and D233. D190 contacts Na(+). Positions 212, 223, and 229 each coordinate Na(+). Residue D260 is the Nucleophile of the active site. H264 contacts Ca(2+). E290 functions as the Proton donor in the catalytic mechanism. Positions 329, 331, 435, 436, and 459 each coordinate Ca(2+).

The protein belongs to the glycosyl hydrolase 13 family. In terms of assembly, monomer. Ca(2+) is required as a cofactor. The cofactor is Na(+).

It localises to the secreted. It catalyses the reaction Endohydrolysis of (1-&gt;4)-alpha-D-glucosidic linkages in polysaccharides containing three or more (1-&gt;4)-alpha-linked D-glucose units.. The chain is Alpha-amylase (amyS) from Bacillus licheniformis.